The chain runs to 117 residues: Acidic phospholipase A2 PA-1G (117 aa).

7 cysteine pairs are disulfide-bonded: cysteine 11/cysteine 71, cysteine 27/cysteine 117, cysteine 29/cysteine 45, cysteine 44/cysteine 98, cysteine 51/cysteine 91, cysteine 60/cysteine 84, and cysteine 78/cysteine 89. Ca(2+)-binding residues include tyrosine 28, glycine 30, and glycine 32. Histidine 48 is a catalytic residue. Residue aspartate 49 participates in Ca(2+) binding. Aspartate 92 is a catalytic residue.

The protein belongs to the phospholipase A2 family. Group I subfamily. D49 sub-subfamily. Ca(2+) serves as cofactor. Expressed by the venom gland.

The protein resides in the secreted. It carries out the reaction a 1,2-diacyl-sn-glycero-3-phosphocholine + H2O = a 1-acyl-sn-glycero-3-phosphocholine + a fatty acid + H(+). Its function is as follows. PLA2 catalyzes the calcium-dependent hydrolysis of the 2-acyl groups in 3-sn-phosphoglycerides. This chain is Acidic phospholipase A2 PA-1G, found in Pseudechis australis (Mulga snake).